A 436-amino-acid polypeptide reads, in one-letter code: Adenylosuccinate synthetase (436 aa).

GTP contacts are provided by residues 12–18 (GDEGKGK) and 40–42 (GHT). Asp13 (proton acceptor) is an active-site residue. Mg(2+)-binding residues include Asp13 and Gly40. IMP-binding positions include 13 to 16 (DEGK), 38 to 41 (NAGH), Thr128, Arg142, Gln223, Thr238, and Arg302. His41 acts as the Proton donor in catalysis. 298 to 304 (TTTGRRR) contacts substrate. Residues Arg304, 330-332 (KLD), and 412-414 (SLG) each bind GTP.

It belongs to the adenylosuccinate synthetase family. As to quaternary structure, homodimer. It depends on Mg(2+) as a cofactor.

The protein resides in the cytoplasm. The catalysed reaction is IMP + L-aspartate + GTP = N(6)-(1,2-dicarboxyethyl)-AMP + GDP + phosphate + 2 H(+). It functions in the pathway purine metabolism; AMP biosynthesis via de novo pathway; AMP from IMP: step 1/2. In terms of biological role, plays an important role in the de novo pathway of purine nucleotide biosynthesis. Catalyzes the first committed step in the biosynthesis of AMP from IMP. The sequence is that of Adenylosuccinate synthetase from Prochlorococcus marinus (strain AS9601).